Reading from the N-terminus, the 156-residue chain is Small ribosomal subunit protein uS7c (156 aa).

The protein belongs to the universal ribosomal protein uS7 family. In terms of assembly, part of the 30S ribosomal subunit.

It localises to the plastid. The protein resides in the chloroplast. In terms of biological role, one of the primary rRNA binding proteins, it binds directly to 16S rRNA where it nucleates assembly of the head domain of the 30S subunit. In Euglena gracilis, this protein is Small ribosomal subunit protein uS7c (rps7).